Reading from the N-terminus, the 321-residue chain is Fe-S cluster assembly protein DRE2 (321 aa).

The segment at 1 to 131 (MERMLLLSPP…KPDFGPENIV (131 aa)) is N-terminal SAM-like domain. The linker stretch occupies residues 132 to 213 (PLKLGKRKPV…EETLLDGEDM (82 aa)). [2Fe-2S] cluster contacts are provided by Cys223, Cys234, Cys237, and Cys239. The interval 223–239 (CRPKAGKRRRACKDCTC) is fe-S binding site A. The [4Fe-4S] cluster site is built by Cys284, Cys287, Cys295, and Cys298. 2 consecutive short sequence motifs (cx2C motif) follow at residues 284 to 287 (CGNC) and 295 to 298 (CDGC). Residues 284–298 (CGNCALGDAFRCDGC) are fe-S binding site B.

Belongs to the anamorsin family. Monomer. Interacts with TAH18. Interacts with MIA40. Requires [2Fe-2S] cluster as cofactor. [4Fe-4S] cluster is required as a cofactor.

The protein localises to the cytoplasm. It is found in the mitochondrion intermembrane space. In terms of biological role, component of the cytosolic iron-sulfur (Fe-S) protein assembly (CIA) machinery required for the maturation of extramitochondrial Fe-S proteins. Part of an electron transfer chain functioning in an early step of cytosolic Fe-S biogenesis, facilitating the de novo assembly of a [4Fe-4S] cluster on the scaffold complex CFD1-NBP35. Electrons are transferred to DRE2 from NADPH via the FAD- and FMN-containing protein TAH18. TAH18-DRE2 are also required for the assembly of the diferric tyrosyl radical cofactor of ribonucleotide reductase (RNR), probably by providing electrons for reduction during radical cofactor maturation in the catalytic small subunit RNR2. This chain is Fe-S cluster assembly protein DRE2, found in Coccidioides posadasii (strain C735) (Valley fever fungus).